Consider the following 828-residue polypeptide: Molybdenum cofactor sulfurase (828 aa).

Residue Lys239 is modified to N6-(pyridoxal phosphate)lysine. Residue Cys402 is part of the active site. Positions 638-682 (TRYTRRSLHSRSSTAALRRQRPVEESSMPGSFPSDTPLSRTPEPP) are disordered. An MOSC domain is found at 652 to 825 (AALRRQRPVE…VMVGDVVRPW (174 aa)).

The protein belongs to the class-V pyridoxal-phosphate-dependent aminotransferase family. MOCOS subfamily. Requires pyridoxal 5'-phosphate as cofactor.

It catalyses the reaction Mo-molybdopterin + L-cysteine + AH2 = thio-Mo-molybdopterin + L-alanine + A + H2O. Functionally, sulfurates the molybdenum cofactor. Sulfation of molybdenum is essential for xanthine dehydrogenase (XDH) and aldehyde oxidase (ADO) enzymes in which molybdenum cofactor is liganded by 1 oxygen and 1 sulfur atom in active form. This chain is Molybdenum cofactor sulfurase, found in Aspergillus terreus (strain NIH 2624 / FGSC A1156).